Reading from the N-terminus, the 804-residue chain is Endoplasmin (804 aa).

Positions 1–21 (MRALWVLGLCCVLLTFGSVRA) are cleaved as a signal peptide. The short motif at 42–44 (SRT) is the SRT pseudosubstrate motif element. The N-linked (GlcNAc...) asparagine glycan is linked to N62. Position 64 is a phosphoserine (S64). An N-linked (GlcNAc...) asparagine glycan is attached at N107. Residues N107, D149, and N162 each contribute to the ATP site. K168 is subject to N6-(2-hydroxyisobutyryl)lysine. A Phosphoserine modification is found at S172. F199 contributes to the ATP binding site. N-linked (GlcNAc...) asparagine glycosylation is present at N217. The tract at residues 288-323 (TVEEPMEEEEAAKEEKEESDDEAAVEEEEEEKKPKT) is disordered. Residues 289–317 (VEEPMEEEEAAKEEKEESDDEAAVEEEEE) are compositionally biased toward acidic residues. Phosphoserine occurs at positions 306 and 403. N6-succinyllysine is present on K404. N445 is a glycosylation site (N-linked (GlcNAc...) asparagine). Phosphoserine is present on S447. K479 carries the N6-acetyllysine modification. N481 and N502 each carry an N-linked (GlcNAc...) asparagine glycan. An N6-succinyllysine modification is found at K633. The tract at residues 750 to 804 (DPDAKVEEEPEEEPEETTEDTTEDTEQDDDEEMDAGADEEEQETSETSTAEKDEL) is disordered. Residues 757–793 (EEPEEEPEETTEDTTEDTEQDDDEEMDAGADEEEQET) are compositionally biased toward acidic residues. The Prevents secretion from ER signature appears at 801–804 (KDEL).

The protein belongs to the heat shock protein 90 family. As to quaternary structure, homodimer; disulfide-linked. Component of an EIF2 complex at least composed of CELF1/CUGBP1, CALR, CALR3, EIF2S1, EIF2S2, HSP90B1 and HSPA5. Part of a large chaperone multiprotein complex comprising DNAJB11, HSP90B1, HSPA5, HYOU, PDIA2, PDIA4, PDIA6, PPIB, SDF2L1, UGGT1 and very small amounts of ERP29, but not, or at very low levels, CALR nor CANX. Interacts with AIMP1; regulates its retention in the endoplasmic reticulum. Hyperglycosylated form interacts with OS9; promoting its degradation by the endoplasmic reticulum associated degradation (ERAD). Interacts with CNPY3. This interaction is disrupted in the presence of ATP. Interacts with TLR4 and TLR9, but not with TLR3. Interacts with MZB1 in a calcium-dependent manner. Interacts with METTL23. Interacts with IL1B; the interaction facilitates cargo translocation into the ERGIC. Interacts with EIF2AK3. Post-translationally, phosphorylated by CK2. In terms of processing, N-glycosylated cotranslationally at Asn-217 by STT3A-containing OST-A complex: this glycosylation is constitutive. In response to various stress, 5 additional facultative sites (Asn-62, Asn-107, Asn-445, Asn-481 and Asn-502) can be glycosylated post-translationally by STT3B-containing OST-B complex, leading to a hyperglycosylated form that is degraded by the ER-associated degradation (ERAD) pathway. In normal conditions, the OST-A complex together with CCDC134 prevent glycosylation at facultative sites during protein folding, thereby preventing hyperglycosylation. Mechanistically, nascent HSP90B1 is tethered during translation to a specialized CCDC134-containing translocon that forms a microenvironment for its folding, in which STT3A associates with the SRT pseudosubstrate motif, and prevents access to facultative glycosylation sites until folding is completed, rendering its facultative sites inaccessible to the OST-B complex.

The protein resides in the endoplasmic reticulum lumen. It localises to the sarcoplasmic reticulum lumen. The protein localises to the melanosome. It catalyses the reaction ATP + H2O = ADP + phosphate + H(+). Its function is as follows. ATP-dependent chaperone involved in the processing of proteins in the endoplasmic reticulum, regulating their transport. Together with MESD, acts as a modulator of the Wnt pathway by promoting the folding of LRP6, a coreceptor of the canonical Wnt pathway. When associated with CNPY3, required for proper folding of Toll-like receptors. Promotes folding and trafficking of TLR4 to the cell surface. May participate in the unfolding of cytosolic leaderless cargos (lacking the secretion signal sequence) such as the interleukin 1/IL-1 to facilitate their translocation into the ERGIC (endoplasmic reticulum-Golgi intermediate compartment) and secretion; the translocation process is mediated by the cargo receptor TMED10. The polypeptide is Endoplasmin (HSP90B1) (Sus scrofa (Pig)).